The primary structure comprises 465 residues: CCA-adding enzyme (465 aa).

ATP contacts are provided by S63 and K66. Positions 63 and 66 each coordinate CTP. Residues E75, D77, and D127 each coordinate Mg(2+). ATP is bound by residues H149, K171, and Y180. CTP is bound by residues H149, K171, and Y180.

It belongs to the tRNA nucleotidyltransferase/poly(A) polymerase family. Archaeal CCA-adding enzyme subfamily. Homodimer. Mg(2+) serves as cofactor.

It carries out the reaction a tRNA precursor + 2 CTP + ATP = a tRNA with a 3' CCA end + 3 diphosphate. It catalyses the reaction a tRNA with a 3' CCA end + 2 CTP + ATP = a tRNA with a 3' CCACCA end + 3 diphosphate. Its function is as follows. Catalyzes the addition and repair of the essential 3'-terminal CCA sequence in tRNAs without using a nucleic acid template. Adds these three nucleotides in the order of C, C, and A to the tRNA nucleotide-73, using CTP and ATP as substrates and producing inorganic pyrophosphate. tRNA 3'-terminal CCA addition is required both for tRNA processing and repair. Also involved in tRNA surveillance by mediating tandem CCA addition to generate a CCACCA at the 3' terminus of unstable tRNAs. While stable tRNAs receive only 3'-terminal CCA, unstable tRNAs are marked with CCACCA and rapidly degraded. The protein is CCA-adding enzyme of Aeropyrum pernix (strain ATCC 700893 / DSM 11879 / JCM 9820 / NBRC 100138 / K1).